Here is a 565-residue protein sequence, read N- to C-terminus: Hemagglutinin-neuraminidase (565 aa).

Residues 1 to 20 (MVAEDAPVRGTCRVLFRTTT) lie on the Intravirion side of the membrane. Residues 21-41 (LIFLCTLLALSISILYESLII) traverse the membrane as a helical segment. The Virion surface segment spans residues 42–565 (QKQIMSQAGS…VPFIRQVTLS (524 aa)). Residues N110 and N139 are each glycosylated (N-linked (GlcNAc...) asparagine; by host). Intrachain disulfides connect C161/C185, C175/C236, and C227/C240. An involved in neuraminidase activity region spans residues 223–228 (NRKSCS). N267 carries an N-linked (GlcNAc...) asparagine; by host glycan. Intrachain disulfides connect C333-C454, C365-C375, and C448-C458. N504 is a glycosylation site (N-linked (GlcNAc...) asparagine; by host). A disulfide bridge links C528 with C539.

This sequence belongs to the paramyxoviruses hemagglutinin-neuraminidase family. In terms of assembly, homotetramer; composed of disulfide-linked homodimers. Interacts with F protein trimer.

It localises to the virion membrane. The protein resides in the host cell membrane. The enzyme catalyses Hydrolysis of alpha-(2-&gt;3)-, alpha-(2-&gt;6)-, alpha-(2-&gt;8)- glycosidic linkages of terminal sialic acid residues in oligosaccharides, glycoproteins, glycolipids, colominic acid and synthetic substrates.. Attaches the virus to sialic acid-containing cell receptors and thereby initiating infection. Binding of HN protein to the receptor induces a conformational change that allows the F protein to trigger virion/cell membranes fusion. Its function is as follows. Neuraminidase activity ensures the efficient spread of the virus by dissociating the mature virions from the neuraminic acid containing glycoproteins. This chain is Hemagglutinin-neuraminidase (HN), found in Parainfluenza virus 5 (isolate Canine/CPI-) (PIV5).